We begin with the raw amino-acid sequence, 326 residues long: Type II methyltransferase M.EcoRI (326 aa).

It belongs to the N(4)/N(6)-methyltransferase family. Monomer.

It carries out the reaction a 2'-deoxyadenosine in DNA + S-adenosyl-L-methionine = an N(6)-methyl-2'-deoxyadenosine in DNA + S-adenosyl-L-homocysteine + H(+). Its function is as follows. A methylase that recognizes the double-stranded sequence 5'-GAATTC-3', methylates A-3 on both strands, and protects the DNA from cleavage by the EcoRI endonuclease. This is Type II methyltransferase M.EcoRI (ecoRIM) from Escherichia coli.